The primary structure comprises 931 residues: Envelope glycoprotein B (931 aa).

Residues 1 to 71 (MSPCGYYSKW…FSMFVTAVVS (71 aa)) form the signal peptide. Over 72–786 (VSPSSFYESL…HGFTTFLSNP (715 aa)) the chain is Virion surface. Cystine bridges form between cysteine 122-cysteine 584, cysteine 139-cysteine 540, cysteine 213-cysteine 277, cysteine 369-cysteine 417, and cysteine 608-cysteine 645. Asparagine 147 is a glycosylation site (N-linked (GlcNAc...) asparagine; by host). The tract at residues 179 to 185 (AWAGSSY) is involved in fusion and/or binding to host membrane. A glycan (N-linked (GlcNAc...) asparagine; by host) is linked at asparagine 257. Residues 264 to 271 (GTPGTYRT) form an involved in fusion and/or binding to host membrane region. Residues asparagine 435, asparagine 503, asparagine 620, and asparagine 686 are each glycosylated (N-linked (GlcNAc...) asparagine; by host). 2 hydrophobic membrane proximal region regions span residues 731-784 (IDKV…TFLS) and 764-784 (VVLG…TFLS). Residues 787 to 807 (FGALAVGLLVLAGLVAAFFAY) traverse the membrane as a helical segment. Residues 808-931 (RYVLKLKTSP…RVRTENVTGV (124 aa)) lie on the Intravirion side of the membrane. The Golgi targeting signature appears at 881-884 (YMTL). The Di-leucine internalization motif motif lies at 904 to 906 (LLT). The Internalization motif signature appears at 920-923 (YSRV).

This sequence belongs to the herpesviridae glycoprotein B family. Homotrimer; disulfide-linked. Binds to heparan sulfate proteoglycans. Interacts with gH/gL heterodimer. Interacts with gE. In terms of processing, a proteolytic cleavage by host furin generates two subunits that remain linked by disulfide bonds.

It localises to the virion membrane. The protein localises to the host cell membrane. Its subcellular location is the host endosome membrane. It is found in the host Golgi apparatus membrane. Envelope glycoprotein that forms spikes at the surface of virion envelope. Essential for the initial attachment to heparan sulfate moieties of the host cell surface proteoglycans. Involved in fusion of viral and cellular membranes leading to virus entry into the host cell. Following initial binding to its host receptors, membrane fusion is mediated by the fusion machinery composed at least of gB and the heterodimer gH/gL. May be involved in the fusion between the virion envelope and the outer nuclear membrane during virion egress. The chain is Envelope glycoprotein B from Varicella-zoster virus (strain Dumas) (HHV-3).